The primary structure comprises 1596 residues: SET-binding protein (1596 aa).

The segment covering 1–12 (MESRETLSSSRQ) has biased composition (polar residues). Disordered regions lie at residues 1–83 (MESR…WVAG), 134–426 (KQSG…SIKA), and 475–518 (SPSV…SRKL). Basic and acidic residues predominate over residues 64–81 (GSGRDVDSNSNADSEKWV). Residues 164–175 (LTASDLAASDLK) show a composition bias toward low complexity. 2 stretches are compositionally biased toward polar residues: residues 213–236 (KSSS…QNCF) and 270–282 (AGNT…NNNK). The span at 290-306 (APSPSSHSSPAPPSSSA) shows a compositional bias: low complexity. Over residues 363 to 372 (DNTEGKREGY) the composition is skewed to basic and acidic residues. Over residues 375–395 (DSAQEASPARQNVSSASNPEN) the composition is skewed to polar residues. A DNA-binding region (a.T hook 1) is located at residues 584–596 (KKKRGRPKKQPLL). Disordered regions lie at residues 604-624 (GTST…KKRK), 722-763 (YIGK…AVPS), and 777-796 (HPLS…ASTE). The span at 779–796 (LSTQLGGSNGNLSPASTE) shows a compositional bias: polar residues. An N6-acetyllysine modification is found at K817. Positions 854–880 (SPVSESHSEETIPSDSGIGTDNNSTSD) are enriched in polar residues. Residues 854–889 (SPVSESHSEETIPSDSGIGTDNNSTSDQAEKSSESR) are disordered. Positions 1016-1028 (KKKRGRPAKTNDT) form a DNA-binding region, a.T hook 2. Disordered regions lie at residues 1134–1164 (PPKV…DRIL), 1202–1225 (EKNK…SKNN), 1245–1300 (AKEK…GSKR), 1325–1344 (SSYD…KVDQ), 1440–1473 (QRQS…DQMP), and 1518–1596 (EAPP…EVLP). The segment covering 1146–1159 (RLHKRKHKHKHKHK) has biased composition (basic residues). Basic residues predominate over residues 1450-1459 (VKKRRGRPRK). The a.T hook 3 DNA-binding region spans 1451–1463 (KKRRGRPRKQPTQ). 3 consecutive repeat copies span residues 1520 to 1527 (PPLPPPPP), 1528 to 1535 (PPLPPPPP), and 1536 to 1543 (PPLPPPPP). The segment at 1520–1543 (PPLPPPPPPPLPPPPPPPLPPPPP) is 3 X 8 AA tandem repeats of P-P-L-P-P-P-P-P. 2 stretches are compositionally biased toward pro residues: residues 1520–1546 (PPLP…PLPK) and 1560–1572 (PAQP…PQQP).

As to quaternary structure, interacts with SET. In terms of tissue distribution, expressed in numerous tissues. Expressed at low levels in myeloid and monocytic cells as well as in CD34+ cells; expression levels are higher in myeloid malignancies.

The protein resides in the nucleus. The protein is SET-binding protein (SETBP1) of Homo sapiens (Human).